The following is a 214-amino-acid chain: MSDLEDDETPQLSAHALAALQEFYAEQKQQIEPGEDDKYNIGIIEENWQLSQFWYSQETALQLAQEAIAAVGEGGRIACVSAPSVYQKLRELCRENFSIYIFEYDKRFAMYGEEFIFYDYNNPLDLPERIAAHSFDIVIADPPYLSEECLRKTSETVKYLTRGKILLCTGAIMEEQAAELLGVKMCTFVPRHTRNLANEFRCYVNYDSGLDCGI.

Serine 2 bears the N-acetylserine mark. Serine 2 is subject to Phosphoserine.

Belongs to the class I-like SAM-binding methyltransferase superfamily. EFM5 family.

It is found in the cytoplasm. The catalysed reaction is L-lysyl-[protein] + 3 S-adenosyl-L-methionine = N(6),N(6),N(6)-trimethyl-L-lysyl-[protein] + 3 S-adenosyl-L-homocysteine + 3 H(+). Functionally, protein N-lysine methyltransferase that selectively catalyzes the trimethylation of EEF1A at 'Lys-79'. The protein is EEF1A lysine methyltransferase 1 of Homo sapiens (Human).